A 358-amino-acid polypeptide reads, in one-letter code: Probable D-xylulose reductase A (358 aa).

Zn(2+) is bound by residues Cys47, His72, and Glu73. Gly182–Gly187 lines the NAD(+) pocket.

It belongs to the zinc-containing alcohol dehydrogenase family. Zn(2+) serves as cofactor.

The catalysed reaction is xylitol + NAD(+) = D-xylulose + NADH + H(+). It participates in carbohydrate degradation; L-arabinose degradation via L-arabinitol; D-xylulose 5-phosphate from L-arabinose (fungal route): step 4/5. Xylitol dehydrogenase which catalyzes the conversion of xylitol to D-xylulose. Xylose is a major component of hemicelluloses such as xylan. Most fungi utilize D-xylose via three enzymatic reactions, xylose reductase (XR), xylitol dehydrogenase (XDH), and xylulokinase, to form xylulose 5-phosphate, which enters pentose phosphate pathway. The polypeptide is Probable D-xylulose reductase A (xdhA) (Neosartorya fischeri (strain ATCC 1020 / DSM 3700 / CBS 544.65 / FGSC A1164 / JCM 1740 / NRRL 181 / WB 181) (Aspergillus fischerianus)).